The primary structure comprises 692 residues: Serine/threonine-protein kinase Nek8 (692 aa).

The Protein kinase domain occupies 4–258 (YERIRVVGRG…LSHIMAQPLC (255 aa)). Residues 10–18 (VGRGAFGIV) and lysine 33 contribute to the ATP site. Aspartate 128 serves as the catalytic Proton acceptor. Residue threonine 162 is modified to Phosphothreonine; by autocatalysis. Residues 277–301 (AEKSVAPSNTGSRTTSVRCRGIPRG) form a disordered region. Residues 282 to 293 (APSNTGSRTTSV) show a composition bias toward polar residues. 5 RCC1 repeats span residues 312–350 (SSVY…VTRS), 410–461 (GIIM…LSTE), 462–513 (RELF…LTVP), 580–631 (GDCY…IGAE), and 632–684 (SEVY…AVRS).

The protein belongs to the protein kinase superfamily. NEK Ser/Thr protein kinase family. NIMA subfamily. In terms of assembly, interacts with PKD2; may regulate PKD2 targeting to the cilium. Interacts with ANKS6. Component of a complex containing at least ANKS6, INVS, NEK8 and NPHP3. ANKS6 may organize complex assembly by linking INVS and NPHP3 to NEK8 and INVS may target the complex to the proximal ciliary axoneme. Interacts with ANKS3. Requires Mg(2+) as cofactor. In terms of tissue distribution, highest expression in thyroid, adrenal gland and skin. Low levels in spleen, colon and uterus. Overexpressed in breast tumors, with highest expression in infiltrating ductal carcinomas and moderate levels in mucinous adenocarcinoma.

The protein localises to the cytoplasm. Its subcellular location is the cytoskeleton. It is found in the cell projection. It localises to the cilium. The protein resides in the microtubule organizing center. The protein localises to the centrosome. Its subcellular location is the cilium axoneme. It carries out the reaction L-seryl-[protein] + ATP = O-phospho-L-seryl-[protein] + ADP + H(+). The enzyme catalyses L-threonyl-[protein] + ATP = O-phospho-L-threonyl-[protein] + ADP + H(+). Functionally, required for renal tubular integrity. May regulate local cytoskeletal structure in kidney tubule epithelial cells. May regulate ciliary biogenesis through targeting of proteins to the cilia. Plays a role in organogenesis, and is involved in the regulation of the Hippo signaling pathway. The polypeptide is Serine/threonine-protein kinase Nek8 (NEK8) (Homo sapiens (Human)).